A 715-amino-acid chain; its full sequence is Inducible lysine decarboxylase (715 aa).

An N6-(pyridoxal phosphate)lysine modification is found at lysine 367.

It belongs to the Orn/Lys/Arg decarboxylase class-I family. Homodecamer. Interacts with RavA. Requires pyridoxal 5'-phosphate as cofactor.

It localises to the cytoplasm. It carries out the reaction L-lysine + H(+) = cadaverine + CO2. The sequence is that of Inducible lysine decarboxylase (cadA) from Escherichia coli O157:H7.